The following is an 810-amino-acid chain: MGRLCTKFLTSVGCLILLLVTGSGSIKVLGEPTCFSDYIRTSTCEWFLDSAVDCSSQLCLHYRLMFFEFSENLTCIPRNSASTVCVCHMEMNRPVQSDRYQMELWAEHRQLWQGSFSPSGNVKPLAPDNLTLHTNVSDEWLLTWNNLYPSNNLLYKDLISMVNISREDNPAEFIVYNVTYKEPRLSFPINILMSGVYYTARVRVRSQILTGTWSEWSPSITWYNHFQLPLIQRLPLGVTISCLCIPLFCLFCYFSITKIKKIWWDQIPTPARSPLVAIIIQDAQVPLWDKQTRSQESTKYPHWKTCLDKLLPCLLKHRVKKKTDFPKAAPTKSLQSPGKAGWCPMEVSRTVLWPENVSVSVVRCMELFEAPVQNVEEEEDEIVKEDLSMSPENSGGCGFQESQADIMARLTENLFSDLLEAENGGLGQSALAESCSPLPSGSGQASVSWACLPMGPSEEATCQVTEQPSHPGPLSGSPAQSAPTLACTQVPLVLADNPAYRSFSDCCSPAPNPGELAPEQQQADHLEEEEPPSPADPHSSGPPMQPVESWEQILHMSVLQHGAAAGSTPAPAGGYQEFVQAVKQGAAQDPGVPGVRPSGDPGYKAFSSLLSSNGIRGDTAAAGTDDGHGGYKPFQNPVPNQSPSSVPLFTFGLDTELSPSPLNSDPPKSPPECLGLELGLKGGDWVKAPPPADQVPKPFGDDLGFGIVYSSLTCHLCGHLKQHHSQEEGGQSPIVASPGCGCCYDDRSPSLGSLSGALESCPEGIPPEANLMSAPKTPSNLSGEGKGPGHSPVPSQTTEVPVGALGIAVS.

A signal peptide spans 1–25 (MGRLCTKFLTSVGCLILLLVTGSGS). At 26–233 (IKVLGEPTCF…NHFQLPLIQR (208 aa)) the chain is on the extracellular side. Cysteine 34 and cysteine 44 are oxidised to a cystine. Asparagine 72 is a glycosylation site (N-linked (GlcNAc...) asparagine). Cysteines 75 and 87 form a disulfide. The Fibronectin type-III domain maps to 126–224 (APDNLTLHTN…EWSPSITWYN (99 aa)). N-linked (GlcNAc...) asparagine glycans are attached at residues asparagine 129, asparagine 135, and asparagine 163. A Phosphoserine modification is found at serine 165. The WSXWS motif signature appears at 213 to 217 (WSEWS). Residues 234-257 (LPLGVTISCLCIPLFCLFCYFSIT) traverse the membrane as a helical segment. Residues 258–810 (KIKKIWWDQI…PVGALGIAVS (553 aa)) are Cytoplasmic-facing. The short motif at 263 to 271 (WWDQIPTPA) is the Box 1 motif element. The interval 441–557 (GSGQASVSWA…ESWEQILHMS (117 aa)) is required for IRS1 activation and IL4-induced cell growth. The segment at 460–482 (ATCQVTEQPSHPGPLSGSPAQSA) is disordered. At tyrosine 500 the chain carries Phosphotyrosine. The tract at residues 510–546 (APNPGELAPEQQQADHLEEEEPPSPADPHSSGPPMQP) is disordered. The interval 557 to 653 (SVLQHGAAAG…SSVPLFTFGL (97 aa)) is required for IL4-induced gene expression. Residues tyrosine 575, tyrosine 603, and tyrosine 631 each carry the phosphotyrosine modification. The tract at residues 586-672 (AAQDPGVPGV…NSDPPKSPPE (87 aa)) is disordered. The segment covering 635-647 (QNPVPNQSPSSVP) has biased composition (low complexity). Residues 707–712 (IVYSSL) carry the ITIM motif motif. Residues 766 to 810 (PPEANLMSAPKTPSNLSGEGKGPGHSPVPSQTTEVPVGALGIAVS) form a disordered region.

This sequence belongs to the type I cytokine receptor family. Type 4 subfamily. As to quaternary structure, the functional IL4 receptor is formed by initial binding of IL4 to IL4R. Subsequent recruitment to the complex of the common gamma chain, in immune cells, creates a type I receptor and, in non-immune cells, of IL13RA1 forms a type II receptor. IL4R can also interact with the IL13/IL13RA1 complex to form a similar type II receptor. Interacts with the SH2-containing phosphatases, PTPN6/SHIP1, PTPN11/SHIP2 and INPP5D/SHIP. Interacts with JAK3. Interacts with PIK3C3. Interacts with JAK1 through a Box 1-containing region; inhibited by SOCS5. Interacts with SOCS5; inhibits IL4 signaling. Interacts with CLM1. Interacts with IL13RA2. On IL4 binding, phosphorylated on C-terminal tyrosine residues. In terms of processing, soluble IL4R can also be produced by proteolytic cleavage at the cell surface (shedding). Expressed in both Th1 and Th2 cells.

It is found in the cell membrane. The protein localises to the secreted. In terms of biological role, receptor for both interleukin 4 and interleukin 13. Couples to the JAK1/2/3-STAT6 pathway. The IL4 response is involved in promoting Th2 differentiation. The IL4/IL13 responses are involved in regulating IgE production and, chemokine and mucus production at sites of allergic inflammation. In certain cell types, can signal through activation of insulin receptor substrates, IRS1/IRS2. In Mus musculus (Mouse), this protein is Interleukin-4 receptor subunit alpha (Il4r).